A 217-amino-acid chain; its full sequence is MVAAFSYTACTKLSLLHPSMVAQIRPRTTQKAFVVTNPEQDSTLEVQETETLKEEQSTEKMKKQPTPLRPVEKQLNVKSKGMGDFGGQWLSSVTRHVRIYAAYIDPETCEFDQSQMDKLTLILDPTEEFVWDDESCNKVYSYFQELVDHYEGAPLTEYTLRLIGSDVEHYIRKMLFDGEIQYNMDARVLNFSMGKPRVQFNTSNIEGGGDGQPQEDA.

Residues 1 to 21 constitute a chloroplast transit peptide; that stretch reads MVAAFSYTACTKLSLLHPSMV. The interval 48 to 67 is disordered; it reads ETETLKEEQSTEKMKKQPTP. Residues 50 to 62 show a composition bias toward basic and acidic residues; that stretch reads ETLKEEQSTEKMK.

This sequence belongs to the NDH complex subunit M family. As to quaternary structure, part of the chloroplast NDH complex, composed of a mixture of chloroplast and nucleus encoded subunits. Component of the NDH subcomplex A, at least composed of ndhH, ndhI, ndhJ, ndhK, ndhL, ndhM, ndhN and ndhO.

The protein localises to the plastid. It is found in the chloroplast thylakoid membrane. The enzyme catalyses a plastoquinone + NADH + (n+1) H(+)(in) = a plastoquinol + NAD(+) + n H(+)(out). It carries out the reaction a plastoquinone + NADPH + (n+1) H(+)(in) = a plastoquinol + NADP(+) + n H(+)(out). In terms of biological role, NDH shuttles electrons from NAD(P)H:plastoquinone, via FMN and iron-sulfur (Fe-S) centers, to quinones in the photosynthetic chain and possibly in a chloroplast respiratory chain. The immediate electron acceptor for the enzyme in this species is believed to be plastoquinone. Couples the redox reaction to proton translocation, and thus conserves the redox energy in a proton gradient. The sequence is that of NAD(P)H-quinone oxidoreductase subunit M, chloroplastic from Arabidopsis thaliana (Mouse-ear cress).